We begin with the raw amino-acid sequence, 333 residues long: 5-formaminoimidazole-4-carboxamide-1-(beta)-D-ribofuranosyl 5'-monophosphate synthetase (333 aa).

5-amino-1-(5-phospho-beta-D-ribosyl)imidazole-4-carboxamide contacts are provided by H21 and S84. The ATP-grasp domain maps to M118–E313. ATP is bound by residues P141–Y187 and E209. Residue N229 participates in 5-amino-1-(5-phospho-beta-D-ribosyl)imidazole-4-carboxamide binding. Residues E268 and E281 each contribute to the Mg(2+) site.

It belongs to the phosphohexose mutase family. Requires Mg(2+) as cofactor. Mn(2+) serves as cofactor.

It catalyses the reaction 5-amino-1-(5-phospho-beta-D-ribosyl)imidazole-4-carboxamide + formate + ATP = 5-formamido-1-(5-phospho-D-ribosyl)imidazole-4-carboxamide + ADP + phosphate. It functions in the pathway purine metabolism; IMP biosynthesis via de novo pathway; 5-formamido-1-(5-phospho-D-ribosyl)imidazole-4-carboxamide from 5-amino-1-(5-phospho-D-ribosyl)imidazole-4-carboxamide (formate route): step 1/1. In terms of biological role, catalyzes the ATP- and formate-dependent formylation of 5-aminoimidazole-4-carboxamide-1-beta-d-ribofuranosyl 5'-monophosphate (AICAR) to 5-formaminoimidazole-4-carboxamide-1-beta-d-ribofuranosyl 5'-monophosphate (FAICAR) in the absence of folates. This chain is 5-formaminoimidazole-4-carboxamide-1-(beta)-D-ribofuranosyl 5'-monophosphate synthetase, found in Pyrobaculum calidifontis (strain DSM 21063 / JCM 11548 / VA1).